The chain runs to 249 residues: 1-(5-phosphoribosyl)-5-[(5-phosphoribosylamino)methylideneamino] imidazole-4-carboxamide isomerase (249 aa).

Aspartate 8 serves as the catalytic Proton acceptor. Catalysis depends on aspartate 130, which acts as the Proton donor.

Belongs to the HisA/HisF family.

Its subcellular location is the cytoplasm. The enzyme catalyses 1-(5-phospho-beta-D-ribosyl)-5-[(5-phospho-beta-D-ribosylamino)methylideneamino]imidazole-4-carboxamide = 5-[(5-phospho-1-deoxy-D-ribulos-1-ylimino)methylamino]-1-(5-phospho-beta-D-ribosyl)imidazole-4-carboxamide. It participates in amino-acid biosynthesis; L-histidine biosynthesis; L-histidine from 5-phospho-alpha-D-ribose 1-diphosphate: step 4/9. This Chromohalobacter salexigens (strain ATCC BAA-138 / DSM 3043 / CIP 106854 / NCIMB 13768 / 1H11) protein is 1-(5-phosphoribosyl)-5-[(5-phosphoribosylamino)methylideneamino] imidazole-4-carboxamide isomerase.